The chain runs to 951 residues: Serine/threonine-protein phosphatase 4 regulatory subunit 1 (951 aa).

HEAT repeat units lie at residues 26–63 (ESDVIIIPSALDFVSQDEMLTPLGRLDKYAASENVFNR), 65–81 (MVARSLLDTLREVCDDE), 82–119 (RDCIAVLERISRLADDSEPTVRAELMEQVPHIALFCQE), 127–164 (AFSKYLLPIVVRYLADQNNQVRKTSQAALLALLEQELI), 168–206 (DVETKVCPVLIDLTAPDSNDDVKTEAVAIMCKMAPMVGK), 208–246 (ITERLILPRFCEMCCDCRMFHVRKVCAANFGDICSVVGQ), 248–285 (ATEEMLLPRFFQLCSDNVWGVRKACAECFMAVSCATCQ), and 287–324 (IRRTKLSALFINLISDPSRWVRQAAFQSLGPFISTFAN). Disordered regions lie at residues 325–377 (PSSS…HSSA), 411–451 (SESP…PLDQ), and 474–499 (QQDPEERLSPERTGDVPAAPLPGPPN). Over residues 332-365 (FKDESKSSEDSSAEDKDRMRDNDVVEEEHRRPED) the composition is skewed to basic and acidic residues. Polar residues-rich tracts occupy residues 411 to 421 (SESPQEAASND) and 430 to 445 (NSKSASRPDAGTSSPE). A compositionally biased stretch (basic and acidic residues) spans 474–487 (QQDPEERLSPERTG). One copy of the HEAT 9 repeat lies at 506 to 543 (KELEEMIENLEPHMDDPDVKAQVDVLSAALRASSLDAH). Residues 590 to 612 (DYVHGGADVSPGDGFSPDEDRRP) form a disordered region. HEAT repeat units lie at residues 699–735 (LTAADLVPIFNGFLKDLDEVRIGVLKHLHDFLKLLHI), 800–838 (WISYKLVSEMVKKLHTATPPTFGVDLINELVENFGRCPK), and 862–899 (QFAVHLMPHLLTLANDRVPNVRVLLAKTLRQTLLEKEY). Ser936 carries the phosphoserine modification.

In terms of assembly, serine/threonine-protein phosphatase 4 (PP4) occurs in different assemblies of the catalytic and one or more regulatory subunits. Component of the PP4 complex PPP4C-PPP4R1. Interacts with HDAC3.

Its function is as follows. Regulatory subunit of serine/threonine-protein phosphatase 4. May play a role in regulation of cell division in renal glomeruli. The PPP4C-PPP4R1 PP4 complex may play a role in dephosphorylation and regulation of HDAC3. Plays a role in the inhibition of TNF-induced NF-kappa-B activation by regulating the dephosphorylation of TRAF2. This Mus musculus (Mouse) protein is Serine/threonine-protein phosphatase 4 regulatory subunit 1 (Ppp4r1).